The sequence spans 162 residues: Large ribosomal subunit protein uL10 (162 aa).

This sequence belongs to the universal ribosomal protein uL10 family. Part of the ribosomal stalk of the 50S ribosomal subunit. The N-terminus interacts with L11 and the large rRNA to form the base of the stalk. The C-terminus forms an elongated spine to which L12 dimers bind in a sequential fashion forming a multimeric L10(L12)X complex.

Functionally, forms part of the ribosomal stalk, playing a central role in the interaction of the ribosome with GTP-bound translation factors. The chain is Large ribosomal subunit protein uL10 from Vibrio cholerae serotype O1 (strain ATCC 39541 / Classical Ogawa 395 / O395).